A 191-amino-acid polypeptide reads, in one-letter code: Ribosomal RNA small subunit methyltransferase G (191 aa).

S-adenosyl-L-methionine contacts are provided by residues Gly62, Phe67, 111–112, and Arg124; that span reads IE.

It belongs to the methyltransferase superfamily. RNA methyltransferase RsmG family.

The protein resides in the cytoplasm. The enzyme catalyses guanosine(527) in 16S rRNA + S-adenosyl-L-methionine = N(7)-methylguanosine(527) in 16S rRNA + S-adenosyl-L-homocysteine. Its function is as follows. Specifically methylates the N7 position of guanine in position 527 of 16S rRNA. The polypeptide is Ribosomal RNA small subunit methyltransferase G (Rickettsia typhi (strain ATCC VR-144 / Wilmington)).